The chain runs to 364 residues: Histidinol-phosphate aminotransferase 1 (364 aa).

At lysine 211 the chain carries N6-(pyridoxal phosphate)lysine.

Belongs to the class-II pyridoxal-phosphate-dependent aminotransferase family. Histidinol-phosphate aminotransferase subfamily. As to quaternary structure, homodimer. Pyridoxal 5'-phosphate is required as a cofactor.

It carries out the reaction L-histidinol phosphate + 2-oxoglutarate = 3-(imidazol-4-yl)-2-oxopropyl phosphate + L-glutamate. The protein operates within amino-acid biosynthesis; L-histidine biosynthesis; L-histidine from 5-phospho-alpha-D-ribose 1-diphosphate: step 7/9. This Legionella pneumophila (strain Lens) protein is Histidinol-phosphate aminotransferase 1.